The chain runs to 358 residues: MKICVIPGDGIGVEICAEAVRVIDALKDIHGLKIEYEYGLLGGAAYDQTGRPLPVETLRLADEANAILLGAVGGPKWDKLPAESRPERGLLGIRKYLGLNANLRPIKVYPELANASTLRPEVVSGLDMMIVRELTGDIYFGQPRGIRTSGFERVGYNTMEYSESEIALIAEMAFRIARQRSGKVMSVDKMNVLECMQLWRDVVTKVGERFPDVTLDHMLVDNAAMQLVKNPKQFDVLLTGNMFGDILSDEAAMLTGSIGMLPSASLNVEDKGMYEPCHGSAPDIAGQGVANPLGMILSAAMMFRYSLGRPDMADAIESAVQTVLTNGARTRDIFQAGDRLVSTSEMGGLVEAALRRIS.

74–87 (GPKWDKLPAESRPE) contributes to the NAD(+) binding site. Substrate is bound by residues Arg94, Arg104, Arg132, and Asp221. Mg(2+)-binding residues include Asp221, Asp245, and Asp249. Position 279–291 (279–291 (GSAPDIAGQGVAN)) interacts with NAD(+).

The protein belongs to the isocitrate and isopropylmalate dehydrogenases family. LeuB type 1 subfamily. Homodimer. It depends on Mg(2+) as a cofactor. Requires Mn(2+) as cofactor.

The protein resides in the cytoplasm. It catalyses the reaction (2R,3S)-3-isopropylmalate + NAD(+) = 4-methyl-2-oxopentanoate + CO2 + NADH. The protein operates within amino-acid biosynthesis; L-leucine biosynthesis; L-leucine from 3-methyl-2-oxobutanoate: step 3/4. Catalyzes the oxidation of 3-carboxy-2-hydroxy-4-methylpentanoate (3-isopropylmalate) to 3-carboxy-4-methyl-2-oxopentanoate. The product decarboxylates to 4-methyl-2 oxopentanoate. This chain is 3-isopropylmalate dehydrogenase 2, found in Dechloromonas aromatica (strain RCB).